Consider the following 249-residue polypeptide: Cobalt transport protein CbiM (249 aa).

The N-terminal stretch at 1–27 (MKPLHRWLPVVIGAALLIIFESRAAYA) is a signal peptide. A run of 6 helical transmembrane segments spans residues 33-53 (GFLPPVWAGFWFIVVLPFWVL), 70-90 (LLLGFAAAFAFVLSALKIPSV), 102-122 (LGTILFGPLVMSVLGSIVLLF), 134-154 (TLGANAFSMAVVGPFVAWLIW), 161-181 (APIWLTVFLAAALADLFTYVV), and 207-227 (IFAVTQIPLAISEGILTVLIF).

It belongs to the CbiM family. As to quaternary structure, forms an energy-coupling factor (ECF) transporter complex composed of an ATP-binding protein (A component, CbiO), a transmembrane protein (T component, CbiQ) and 2 possible substrate-capture proteins (S components, CbiM and CbiN) of unknown stoichimetry.

The protein localises to the cell membrane. It participates in cofactor biosynthesis; adenosylcobalamin biosynthesis. Part of the energy-coupling factor (ECF) transporter complex CbiMNOQ involved in cobalt import. The protein is Cobalt transport protein CbiM of Roseiflexus sp. (strain RS-1).